The primary structure comprises 336 residues: GTPase Obg (336 aa).

One can recognise an Obg domain in the interval 1–159 (MKFVDSATVF…LELAMELKLM (159 aa)). The disordered stretch occupies residues 120–143 (GGHGGRGNQHFATSTNQAPRRSEP). Positions 129–138 (HFATSTNQAP) are enriched in polar residues. Residues 160 to 323 (ADVGLVGFPN…LKDELWRQVS (164 aa)) form the OBG-type G domain. Residues 166–173 (GFPNAGKS), 191–195 (FTTLV), 213–216 (DIPG), 280–283 (TKMD), and 304–306 (SSV) contribute to the GTP site. Residues serine 173 and threonine 193 each coordinate Mg(2+).

It belongs to the TRAFAC class OBG-HflX-like GTPase superfamily. OBG GTPase family. As to quaternary structure, monomer. Mg(2+) is required as a cofactor.

It is found in the cytoplasm. In terms of biological role, an essential GTPase which binds GTP, GDP and possibly (p)ppGpp with moderate affinity, with high nucleotide exchange rates and a fairly low GTP hydrolysis rate. Plays a role in control of the cell cycle, stress response, ribosome biogenesis and in those bacteria that undergo differentiation, in morphogenesis control. The protein is GTPase Obg of Chlorobium phaeovibrioides (strain DSM 265 / 1930) (Prosthecochloris vibrioformis (strain DSM 265)).